A 75-amino-acid polypeptide reads, in one-letter code: MSKQDLIEMEGTVMESLPNAMFRVDLDNGFNVLAHISGKIRRNYIKILPGDRVKVELTPYDLTKGRITYRLKNKK.

The region spanning 1–72 (MSKQDLIEME…TKGRITYRLK (72 aa)) is the S1-like domain.

It belongs to the IF-1 family. In terms of assembly, component of the 30S ribosomal translation pre-initiation complex which assembles on the 30S ribosome in the order IF-2 and IF-3, IF-1 and N-formylmethionyl-tRNA(fMet); mRNA recruitment can occur at any time during PIC assembly.

The protein localises to the cytoplasm. Its function is as follows. One of the essential components for the initiation of protein synthesis. Stabilizes the binding of IF-2 and IF-3 on the 30S subunit to which N-formylmethionyl-tRNA(fMet) subsequently binds. Helps modulate mRNA selection, yielding the 30S pre-initiation complex (PIC). Upon addition of the 50S ribosomal subunit IF-1, IF-2 and IF-3 are released leaving the mature 70S translation initiation complex. The sequence is that of Translation initiation factor IF-1 from Synechocystis sp. (strain ATCC 27184 / PCC 6803 / Kazusa).